Reading from the N-terminus, the 509-residue chain is ATP synthase subunit alpha, mitochondrial (509 aa).

An ATP-binding site is contributed by 171 to 178 (GDRQTGKT).

This sequence belongs to the ATPase alpha/beta chains family. As to quaternary structure, F-type ATPases have 2 components, CF(1) - the catalytic core - and CF(0) - the membrane proton channel. CF(1) has five subunits: alpha(3), beta(3), gamma(1), delta(1), epsilon(1). CF(0) has three main subunits: a, b and c.

The protein resides in the mitochondrion. The protein localises to the mitochondrion inner membrane. In terms of biological role, mitochondrial membrane ATP synthase (F(1)F(0) ATP synthase or Complex V) produces ATP from ADP in the presence of a proton gradient across the membrane which is generated by electron transport complexes of the respiratory chain. F-type ATPases consist of two structural domains, F(1) - containing the extramembraneous catalytic core, and F(0) - containing the membrane proton channel, linked together by a central stalk and a peripheral stalk. During catalysis, ATP synthesis in the catalytic domain of F(1) is coupled via a rotary mechanism of the central stalk subunits to proton translocation. Subunits alpha and beta form the catalytic core in F(1). Rotation of the central stalk against the surrounding alpha(3)beta(3) subunits leads to hydrolysis of ATP in three separate catalytic sites on the beta subunits. Subunit alpha does not bear the catalytic high-affinity ATP-binding sites. This chain is ATP synthase subunit alpha, mitochondrial (ATPA), found in Nicotiana plumbaginifolia (Leadwort-leaved tobacco).